Here is a 206-residue protein sequence, read N- to C-terminus: ATP-dependent Clp protease proteolytic subunit (206 aa).

The Nucleophile role is filled by serine 107. Residue histidine 132 is part of the active site.

It belongs to the peptidase S14 family. As to quaternary structure, fourteen ClpP subunits assemble into 2 heptameric rings which stack back to back to give a disk-like structure with a central cavity, resembling the structure of eukaryotic proteasomes.

Its subcellular location is the cytoplasm. It catalyses the reaction Hydrolysis of proteins to small peptides in the presence of ATP and magnesium. alpha-casein is the usual test substrate. In the absence of ATP, only oligopeptides shorter than five residues are hydrolyzed (such as succinyl-Leu-Tyr-|-NHMec, and Leu-Tyr-Leu-|-Tyr-Trp, in which cleavage of the -Tyr-|-Leu- and -Tyr-|-Trp bonds also occurs).. Cleaves peptides in various proteins in a process that requires ATP hydrolysis. Has a chymotrypsin-like activity. Plays a major role in the degradation of misfolded proteins. The protein is ATP-dependent Clp protease proteolytic subunit of Idiomarina loihiensis (strain ATCC BAA-735 / DSM 15497 / L2-TR).